Consider the following 548-residue polypeptide: Probable aquaglyceroporin-4 (548 aa).

Positions 1-22 (MAGTQDQSQDYFSKPTTPSTPG) are enriched in polar residues. 3 disordered regions span residues 1–63 (MAGT…LPST), 76–101 (SRGFSRVSSEGTASRPTAPQHSSHFH), and 158–270 (KEET…ESGD). The Cytoplasmic segment spans residues 1–290 (MAGTQDQSQD…ARLRARHPEP (290 aa)). Over residues 38–48 (PDRESGTERAK) the composition is skewed to basic and acidic residues. Composition is skewed to polar residues over residues 77–97 (RGFSRVSSEGTASRPTAPQHS) and 171–200 (SRTTSGQPYRVETQSSLPSRDIQRQQSRTT). Residues 249–265 (PDFKVDGEPLGHQEKPC) are compositionally biased toward basic and acidic residues. Residues 291–311 (LAEFLATAVAIFLGLTGTLSV) form a helical membrane-spanning segment. Asn-312 carries N-linked (GlcNAc...) asparagine glycosylation. At 312-327 (NLSATQSQPYGTYETS) the chain is on the extracellular side. Residues 328–348 (CWAWGFAWMFGIYLGGGVSGA) traverse the membrane as a helical segment. The Cytoplasmic portion of the chain corresponds to 349–369 (HMNPAISVSLSIFRGFPWRQC). Residues 351–353 (NPA) carry the NPA 1 motif. The chain crosses the membrane as a helical span at residues 370 to 390 (VIYVFVQFIASIVAGALAYAM). The Extracellular portion of the chain corresponds to 391–420 (YADSINHVDPDMTKMSMTFFSTPREWVTLK). Residues 421-441 (SAFFNQVVGSAIMMIAVFALG) traverse the membrane as a helical segment. Over 442-448 (DDQNNPP) the chain is Cytoplasmic. A helical transmembrane segment spans residues 449-469 (GAGMHALVLGFLVTTLKFTLG). Over 470–508 (YNIGSALNPASDFGPRVIAYAVGFRGDNVFHSGWWFYGP) the chain is Extracellular. The NPA 2 signature appears at 477–479 (NPA). Residues 509 to 529 (WAATLIGSLLGCTLYDGFVFV) traverse the membrane as a helical segment. Residues 530–548 (GSESPVNFRVDKRVKKLFN) lie on the Cytoplasmic side of the membrane.

The protein belongs to the MIP/aquaporin (TC 1.A.8) family.

It is found in the membrane. It carries out the reaction H2O(in) = H2O(out). The enzyme catalyses glycerol(in) = glycerol(out). Functionally, probable water/glycerol channel that may have redundant functions with FgAQP2. This is Probable aquaglyceroporin-4 from Gibberella zeae (strain ATCC MYA-4620 / CBS 123657 / FGSC 9075 / NRRL 31084 / PH-1) (Wheat head blight fungus).